The sequence spans 393 residues: Homoserine O-succinyltransferase (393 aa).

Positions 62-372 (NAVLVCHALN…PHGHDAFLLD (311 aa)) constitute an AB hydrolase-1 domain. Ser-168 (nucleophile) is an active-site residue. Arg-238 contributes to the substrate binding site. Active-site residues include Asp-333 and His-366. Substrate is bound at residue Asp-367.

The protein belongs to the AB hydrolase superfamily. MetX family. Homodimer.

The protein localises to the cytoplasm. It carries out the reaction L-homoserine + succinyl-CoA = O-succinyl-L-homoserine + CoA. It participates in amino-acid biosynthesis; L-methionine biosynthesis via de novo pathway; O-succinyl-L-homoserine from L-homoserine: step 1/1. Transfers a succinyl group from succinyl-CoA to L-homoserine, forming succinyl-L-homoserine. This chain is Homoserine O-succinyltransferase, found in Cupriavidus necator (strain ATCC 17699 / DSM 428 / KCTC 22496 / NCIMB 10442 / H16 / Stanier 337) (Ralstonia eutropha).